Here is a 377-residue protein sequence, read N- to C-terminus: Succinyl-diaminopimelate desuccinylase (377 aa).

Position 75 (H75) interacts with Zn(2+). Residue D77 is part of the active site. Residue D106 coordinates Zn(2+). The Proton acceptor role is filled by E136. Zn(2+) is bound by residues E137, E165, and H350.

The protein belongs to the peptidase M20A family. DapE subfamily. Homodimer. Zn(2+) serves as cofactor. The cofactor is Co(2+).

The catalysed reaction is N-succinyl-(2S,6S)-2,6-diaminopimelate + H2O = (2S,6S)-2,6-diaminopimelate + succinate. The protein operates within amino-acid biosynthesis; L-lysine biosynthesis via DAP pathway; LL-2,6-diaminopimelate from (S)-tetrahydrodipicolinate (succinylase route): step 3/3. Its function is as follows. Catalyzes the hydrolysis of N-succinyl-L,L-diaminopimelic acid (SDAP), forming succinate and LL-2,6-diaminopimelate (DAP), an intermediate involved in the bacterial biosynthesis of lysine and meso-diaminopimelic acid, an essential component of bacterial cell walls. In Sphingopyxis alaskensis (strain DSM 13593 / LMG 18877 / RB2256) (Sphingomonas alaskensis), this protein is Succinyl-diaminopimelate desuccinylase.